The chain runs to 901 residues: MAAQNEQRPERIKTTPYLEGDVLSSDSGPLLSVFALQEIMQKVRQVQADYMTATREVDFTVPDVQKILDDIKALTVEQVYKIVKVPSISFRHIVMQSRDRVLRVDTYYEEMSQVGDVITEDEPEKFYSTIIKKVRFIRGKGSFILHDIPTRDHRGMEAAEPEVLGVEFKNVPPVLTAEHRAMIQSALDGSIIENGNVATRDVDVFIGACSEPIYRIYNRLQGYIEAVQLQELRNSIGWLERLGQRKRITYSQEVLTDFRRQDTIWVLALQLPVNPQVVWDVPRSSIANLIMNIATCLPTGEYIAPNPRISSITLTQRITTTGPFAILTGSTPTAQQLNDVRKIYLALMFPGQIILDLKIDPGERMDPAVRMVAGVVGHLLFTAGGRFTNLTQNMARQLDIALNDYLLYMYNTRVQVNYGPTGEPLDFQIGRNQYDCNVFRADFATGTGYNGWATIDVEYRDPAPYVHAQRYIRYCGIDSRELINPTTYGIGMTYHCYNEMLRMLVAAGKDSEAAYFRSMLPFHMVRFARINQIINEDLHSVFSLPDDMFNALLPDLVAGAHQNADPVVLDVSWISLWFAFNRSFEPTHRNEMLEIAPLIESVYASELSVMKVDIRHLSLMQRRFPDVLIQARPSHFWKAVLNDSPEAVKAVMNLSHSHNFINIRDMMRWVLLPSLQPSLKLALEEEAWAAANDFEDLMLTDQVYMHRDMLPEPRLDDIERFRQEGFYYTNMLEAPPEIDRVVQYTYEIARLQADMGQFRAALRRIMDDDDWVRSDGVLRTVRVKFFDARPPDDILQGLPFSYDTNEKGGLSYATIKYATETTIFYLIYNVEFSNTPDSLVLINPTYTMTKVFINKRIVERVRVGQILAVLNRRFVAYKGKMRIMDITQSLKMGTKLAAPTV.

This sequence belongs to the orbivirus VP3 family.

Its subcellular location is the virion. Its function is as follows. The VP3 protein is one of the five proteins (with VP1, VP4, VP6 and VP7) which form the inner capsid of the virus. In Antilocapra americana (Pronghorn), this protein is Core protein VP3 (Segment-3).